The primary structure comprises 425 residues: Histidine--tRNA ligase (425 aa).

Belongs to the class-II aminoacyl-tRNA synthetase family. As to quaternary structure, homodimer.

It localises to the cytoplasm. It catalyses the reaction tRNA(His) + L-histidine + ATP = L-histidyl-tRNA(His) + AMP + diphosphate + H(+). The sequence is that of Histidine--tRNA ligase from Histophilus somni (strain 129Pt) (Haemophilus somnus).